Here is a 406-residue protein sequence, read N- to C-terminus: Probable peptidoglycan glycosyltransferase FtsW (406 aa).

Transmembrane regions (helical) follow at residues Leu-22–Ala-42, Phe-56–Leu-76, Trp-86–Ile-106, Trp-116–Val-136, Leu-153–Glu-173, Val-186–Met-206, Ile-280–Met-300, Phe-318–Val-338, and Leu-352–Val-372. Over residues Ser-383–Glu-397 the composition is skewed to basic and acidic residues. Residues Ser-383–Ala-406 are disordered.

This sequence belongs to the SEDS family. FtsW subfamily.

It is found in the cell inner membrane. It catalyses the reaction [GlcNAc-(1-&gt;4)-Mur2Ac(oyl-L-Ala-gamma-D-Glu-L-Lys-D-Ala-D-Ala)](n)-di-trans,octa-cis-undecaprenyl diphosphate + beta-D-GlcNAc-(1-&gt;4)-Mur2Ac(oyl-L-Ala-gamma-D-Glu-L-Lys-D-Ala-D-Ala)-di-trans,octa-cis-undecaprenyl diphosphate = [GlcNAc-(1-&gt;4)-Mur2Ac(oyl-L-Ala-gamma-D-Glu-L-Lys-D-Ala-D-Ala)](n+1)-di-trans,octa-cis-undecaprenyl diphosphate + di-trans,octa-cis-undecaprenyl diphosphate + H(+). Its pathway is cell wall biogenesis; peptidoglycan biosynthesis. In terms of biological role, peptidoglycan polymerase that is essential for cell division. The chain is Probable peptidoglycan glycosyltransferase FtsW from Marinomonas mediterranea (strain ATCC 700492 / JCM 21426 / NBRC 103028 / MMB-1).